Here is a 217-residue protein sequence, read N- to C-terminus: ATP-dependent Clp protease proteolytic subunit (217 aa).

Ser121 acts as the Nucleophile in catalysis. His146 is a catalytic residue.

This sequence belongs to the peptidase S14 family. As to quaternary structure, fourteen ClpP subunits assemble into 2 heptameric rings which stack back to back to give a disk-like structure with a central cavity, resembling the structure of eukaryotic proteasomes.

Its subcellular location is the cytoplasm. The catalysed reaction is Hydrolysis of proteins to small peptides in the presence of ATP and magnesium. alpha-casein is the usual test substrate. In the absence of ATP, only oligopeptides shorter than five residues are hydrolyzed (such as succinyl-Leu-Tyr-|-NHMec, and Leu-Tyr-Leu-|-Tyr-Trp, in which cleavage of the -Tyr-|-Leu- and -Tyr-|-Trp bonds also occurs).. Functionally, cleaves peptides in various proteins in a process that requires ATP hydrolysis. Has a chymotrypsin-like activity. Plays a major role in the degradation of misfolded proteins. This chain is ATP-dependent Clp protease proteolytic subunit, found in Burkholderia mallei (strain NCTC 10247).